A 132-amino-acid chain; its full sequence is Small ribosomal subunit protein uS11 (132 aa).

Belongs to the universal ribosomal protein uS11 family. Part of the 30S ribosomal subunit. Interacts with proteins S7 and S18. Binds to IF-3.

In terms of biological role, located on the platform of the 30S subunit, it bridges several disparate RNA helices of the 16S rRNA. Forms part of the Shine-Dalgarno cleft in the 70S ribosome. The chain is Small ribosomal subunit protein uS11 from Cyanothece sp. (strain PCC 7425 / ATCC 29141).